Consider the following 647-residue polypeptide: DNA mismatch repair protein MutL (647 aa).

A disordered region spans residues 389-423 (SESSVSSVANKQQPTVKQAKRSADDSDSEHGKLDY). Residues 409–423 (RSADDSDSEHGKLDY) show a composition bias toward basic and acidic residues.

The protein belongs to the DNA mismatch repair MutL/HexB family.

Functionally, this protein is involved in the repair of mismatches in DNA. It is required for dam-dependent methyl-directed DNA mismatch repair. May act as a 'molecular matchmaker', a protein that promotes the formation of a stable complex between two or more DNA-binding proteins in an ATP-dependent manner without itself being part of a final effector complex. The polypeptide is DNA mismatch repair protein MutL (Streptococcus thermophilus (strain ATCC BAA-491 / LMD-9)).